We begin with the raw amino-acid sequence, 329 residues long: Beta-ketoacyl-[acyl-carrier-protein] synthase III (329 aa).

Catalysis depends on residues Cys-114 and His-255. The interval 256-260 (QANQR) is ACP-binding. Asn-285 is a catalytic residue.

Belongs to the thiolase-like superfamily. FabH family. As to quaternary structure, homodimer.

Its subcellular location is the cytoplasm. It catalyses the reaction malonyl-[ACP] + acetyl-CoA + H(+) = 3-oxobutanoyl-[ACP] + CO2 + CoA. The protein operates within lipid metabolism; fatty acid biosynthesis. In terms of biological role, catalyzes the condensation reaction of fatty acid synthesis by the addition to an acyl acceptor of two carbons from malonyl-ACP. Catalyzes the first condensation reaction which initiates fatty acid synthesis and may therefore play a role in governing the total rate of fatty acid production. Possesses both acetoacetyl-ACP synthase and acetyl transacylase activities. Its substrate specificity determines the biosynthesis of branched-chain and/or straight-chain of fatty acids. This chain is Beta-ketoacyl-[acyl-carrier-protein] synthase III, found in Trichodesmium erythraeum (strain IMS101).